Here is a 576-residue protein sequence, read N- to C-terminus: Chaperonin CPN60-2, mitochondrial (576 aa).

A mitochondrion-targeting transit peptide spans Met1 to Tyr34.

This sequence belongs to the chaperonin (HSP60) family.

Its subcellular location is the mitochondrion. Its function is as follows. Implicated in mitochondrial protein import and macromolecular assembly. May facilitate the correct folding of imported proteins. May also prevent misfolding and promote the refolding and proper assembly of unfolded polypeptides generated under stress conditions in the mitochondrial matrix. The protein is Chaperonin CPN60-2, mitochondrial (CPN60II) of Zea mays (Maize).